Reading from the N-terminus, the 130-residue chain is MSMQDTLADMFTRIRNAQMAAKTSVSMPSSKMKSSIAAVLREEGYVGDFSVDEAVKPTLTIELKYYEGKPVIEQIKRASRPSLRQYKGTSALPKVEAGLGVAIISTSKGVMTDRAARAAGIGGEVICTVF.

Belongs to the universal ribosomal protein uS8 family. Part of the 30S ribosomal subunit. Contacts proteins S5 and S12.

Its function is as follows. One of the primary rRNA binding proteins, it binds directly to 16S rRNA central domain where it helps coordinate assembly of the platform of the 30S subunit. The polypeptide is Small ribosomal subunit protein uS8 (Marinomonas sp. (strain MWYL1)).